Consider the following 417-residue polypeptide: uncharacterized protein (417 aa).

2 disordered regions span residues 44 to 83 (FTNE…VRSR) and 325 to 346 (VQSA…PPKE). Over residues 54–64 (SNYSTSGYDSS) the composition is skewed to low complexity. Over residues 65-76 (AETISANSSPIN) the composition is skewed to polar residues. Positions 326-339 (QSARKNQKKGRKNR) are enriched in basic residues. Residues 362 to 382 (FLIIGVYVLVFIYVCTNVLTV) traverse the membrane as a helical segment.

It localises to the membrane. This is an uncharacterized protein from Caenorhabditis elegans.